We begin with the raw amino-acid sequence, 558 residues long: Glucose-6-phosphate isomerase (558 aa).

Catalysis depends on Glu-362, which acts as the Proton donor. Catalysis depends on residues His-393 and Lys-523.

This sequence belongs to the GPI family.

Its subcellular location is the cytoplasm. It catalyses the reaction alpha-D-glucose 6-phosphate = beta-D-fructose 6-phosphate. It participates in carbohydrate degradation; glycolysis; D-glyceraldehyde 3-phosphate and glycerone phosphate from D-glucose: step 2/4. The polypeptide is Glucose-6-phosphate isomerase (Pgi) (Drosophila melanogaster (Fruit fly)).